A 136-amino-acid polypeptide reads, in one-letter code: MSALVYFSSSSENTHRFMQRLGLPATRIPLNERERIQVDEPYILVVPSYGGGGMAGAVPRQVIRFLNDEHNRARIRGVIASGNRNFGDAWGCAGDVIAQKCGVPWLYRFELMGTQRDIDNVRKGVNEFWQQSPRSA.

This sequence belongs to the NrdI family.

Probably involved in ribonucleotide reductase function. This is Protein NrdI from Salmonella typhi.